Here is a 1045-residue protein sequence, read N- to C-terminus: Translation initiation factor IF-2 (1045 aa).

2 disordered regions span residues 1–169 and 184–451; these read MSDE…AQAP and QAPA…RGGP. The span at 83–94 shows a compositional bias: gly residues; that stretch reads SGGGGSSAGGLS. The segment covering 103 to 123 has biased composition (basic and acidic residues); the sequence is RAIEAAREHQERQAAERRAAE. The span at 124–151 shows a compositional bias: low complexity; it reads ARAASEAAAARDAAAKSAAAAKAAAAPA. The segment covering 152 to 163 has biased composition (pro residues); it reads PEAPAAPAPTPA. Low complexity predominate over residues 184–199; the sequence is QAPAAPVAAAPAAPRA. Basic and acidic residues-rich tracts occupy residues 227–237 and 302–323; these read EPSRDRRDDRS and RNDR…RPQG. Residues 338 to 348 are compositionally biased toward pro residues; sequence RPAPGARPGPG. Positions 352 to 363 are enriched in low complexity; it reads GARPGVPASAPA. 2 stretches are compositionally biased toward basic and acidic residues: residues 381 to 393 and 438 to 450; these read VGRK…DRRK and RARE…RRGG. In terms of domain architecture, tr-type G spans 540–710; it reads PRPPVVTVMG…LLLAEVMDLK (171 aa). The tract at residues 549–556 is G1; sequence GHVDHGKT. Position 549 to 556 (549 to 556) interacts with GTP; that stretch reads GHVDHGKT. The interval 574–578 is G2; that stretch reads GITQH. The tract at residues 596-599 is G3; it reads DTPG. Residues 596-600 and 650-653 each bind GTP; these read DTPGH and NKMD. The interval 650–653 is G4; sequence NKMD. The interval 686-688 is G5; the sequence is SAK.

It belongs to the TRAFAC class translation factor GTPase superfamily. Classic translation factor GTPase family. IF-2 subfamily.

It is found in the cytoplasm. Its function is as follows. One of the essential components for the initiation of protein synthesis. Protects formylmethionyl-tRNA from spontaneous hydrolysis and promotes its binding to the 30S ribosomal subunits. Also involved in the hydrolysis of GTP during the formation of the 70S ribosomal complex. In Caulobacter sp. (strain K31), this protein is Translation initiation factor IF-2.